The primary structure comprises 174 residues: Co-chaperone protein HscB homolog (174 aa).

In terms of domain architecture, J spans 2-74 (NYFNLFNFTP…LRRAEHLLSL (73 aa)).

The protein belongs to the HscB family. Interacts with HscA and stimulates its ATPase activity.

Functionally, co-chaperone involved in the maturation of iron-sulfur cluster-containing proteins. Seems to help targeting proteins to be folded toward HscA. The sequence is that of Co-chaperone protein HscB homolog from Shewanella denitrificans (strain OS217 / ATCC BAA-1090 / DSM 15013).